Here is a 168-residue protein sequence, read N- to C-terminus: MMFAYIVAVVSALALTSAFPTGAPRSACFDMIPGHFANPKLEPAPYTITTPISAVKGGNSVEVTISGKTPEDTMRGILLEARQGDNIVGTWTVPPGDDFSQPMNCGEPNNAVTHKRHSESADKQTVSYVWTAPSDLEGDVVFMVTIVKDYSNFWVRQTSAPVKILSHH.

The N-terminal stretch at 1 to 18 (MMFAYIVAVVSALALTSA) is a signal peptide. Residues 19–168 (FPTGAPRSAC…SAPVKILSHH (150 aa)) form the Reelin domain. Residues Cys-28 and Cys-105 are joined by a disulfide bond.

Belongs to the insect defense protein family. In terms of tissue distribution, very highly expressed in midgut, and highly expressed in fat body, silk gland and epidermis.

The protein localises to the secreted. Functionally, as this protein is expressed upon bacterial infection, it may have antimicrobial activity. In Antheraea mylitta (Tasar silkworm), this protein is Putative defense protein 1.